Consider the following 460-residue polypeptide: Cysteine--tRNA ligase (460 aa).

Residue Cys28 participates in Zn(2+) binding. The short motif at 30–40 (MTVYDYCHLGH) is the 'HIGH' region element. Zn(2+)-binding residues include Cys209, His234, and Glu238. Residues 266–270 (KMSKS) carry the 'KMSKS' region motif. Lys269 serves as a coordination point for ATP.

It belongs to the class-I aminoacyl-tRNA synthetase family. Monomer. It depends on Zn(2+) as a cofactor.

The protein resides in the cytoplasm. The catalysed reaction is tRNA(Cys) + L-cysteine + ATP = L-cysteinyl-tRNA(Cys) + AMP + diphosphate. This is Cysteine--tRNA ligase from Pseudomonas savastanoi pv. phaseolicola (strain 1448A / Race 6) (Pseudomonas syringae pv. phaseolicola (strain 1448A / Race 6)).